A 365-amino-acid polypeptide reads, in one-letter code: Histidinol-phosphate aminotransferase (365 aa).

Lys-222 is subject to N6-(pyridoxal phosphate)lysine.

This sequence belongs to the class-II pyridoxal-phosphate-dependent aminotransferase family. Histidinol-phosphate aminotransferase subfamily. As to quaternary structure, homodimer. The cofactor is pyridoxal 5'-phosphate.

It catalyses the reaction L-histidinol phosphate + 2-oxoglutarate = 3-(imidazol-4-yl)-2-oxopropyl phosphate + L-glutamate. It participates in amino-acid biosynthesis; L-histidine biosynthesis; L-histidine from 5-phospho-alpha-D-ribose 1-diphosphate: step 7/9. This is Histidinol-phosphate aminotransferase from Geobacillus thermodenitrificans (strain NG80-2).